The following is a 416-amino-acid chain: Thioredoxin domain-containing protein 5 homolog (416 aa).

A signal peptide spans 1 to 25 (MLTRSILSVAVCGLLLSPLLPITRA). 3 Thioredoxin domains span residues 26 to 145 (SQEE…KELS), 150 to 272 (ADLG…KMVG), and 293 to 412 (AGEE…KFLG). 3 disulfide bridges follow: Cys-65–Cys-68, Cys-194–Cys-197, and Cys-331–Cys-334. Residues 413 to 416 (HDEL) carry the Prevents secretion from ER motif.

This sequence belongs to the protein disulfide isomerase family.

Its subcellular location is the endoplasmic reticulum. It localises to the cell surface. Functionally, possesses thioredoxin activity. Acts as a ligand for Drpr and is required for the phagocytosis of apoptotic cells. Binds to the extracellular region of Drpr and augments Drpr tyrosine phosphorylation. The sequence is that of Thioredoxin domain-containing protein 5 homolog from Drosophila melanogaster (Fruit fly).